The chain runs to 313 residues: Methylenetetrahydrofolate dehydrogenase [NAD(+)] (313 aa).

Cysteine 152 is an active-site residue. NAD(+)-binding positions include 187–188, 210–211, and 270–272; these read RS, DI, and FAG.

This sequence belongs to the tetrahydrofolate dehydrogenase/cyclohydrolase family. In terms of assembly, homodimer.

The catalysed reaction is (6R)-5,10-methylene-5,6,7,8-tetrahydrofolate + NAD(+) = (6R)-5,10-methenyltetrahydrofolate + NADH. It functions in the pathway one-carbon metabolism; tetrahydrofolate interconversion. Functionally, catalyzes oxidation of cytoplasmic one-carbon units for purine biosynthesis. In Dictyostelium discoideum (Social amoeba), this protein is Methylenetetrahydrofolate dehydrogenase [NAD(+)] (thfA).